The sequence spans 172 residues: MKRDTKQQIVQEVAEKISQAQGIYLTEFQGLTVEKMSELRGEFRKAGVEYRVVKNTLIRKALQDMAGADKLAPALKSTTAIAFGIDDPVAPAKVIKKFSKANDQLKFKMAAIDGAVYGADQLTLLSEMLSKTENIGRTAGLINNVIGSVPMVVNAVMRNMVCALDQIAKQKQ.

This sequence belongs to the universal ribosomal protein uL10 family. Part of the ribosomal stalk of the 50S ribosomal subunit. The N-terminus interacts with L11 and the large rRNA to form the base of the stalk. The C-terminus forms an elongated spine to which L12 dimers bind in a sequential fashion forming a multimeric L10(L12)X complex.

In terms of biological role, forms part of the ribosomal stalk, playing a central role in the interaction of the ribosome with GTP-bound translation factors. The sequence is that of Large ribosomal subunit protein uL10 from Chlorobium chlorochromatii (strain CaD3).